The sequence spans 666 residues: tRNA 5-methylaminomethyl-2-thiouridine biosynthesis bifunctional protein MnmC (666 aa).

The segment at 1-253 (MSSPFAPIIT…KRHMLCAYYE (253 aa)) is tRNA (mnm(5)s(2)U34)-methyltransferase. The segment at 283-666 (VGGGLAGCFI…FLRKKIIQGP (384 aa)) is FAD-dependent cmnm(5)s(2)U34 oxidoreductase.

It in the N-terminal section; belongs to the methyltransferase superfamily. tRNA (mnm(5)s(2)U34)-methyltransferase family. The protein in the C-terminal section; belongs to the DAO family. The cofactor is FAD.

The protein resides in the cytoplasm. It catalyses the reaction 5-aminomethyl-2-thiouridine(34) in tRNA + S-adenosyl-L-methionine = 5-methylaminomethyl-2-thiouridine(34) in tRNA + S-adenosyl-L-homocysteine + H(+). Catalyzes the last two steps in the biosynthesis of 5-methylaminomethyl-2-thiouridine (mnm(5)s(2)U) at the wobble position (U34) in tRNA. Catalyzes the FAD-dependent demodification of cmnm(5)s(2)U34 to nm(5)s(2)U34, followed by the transfer of a methyl group from S-adenosyl-L-methionine to nm(5)s(2)U34, to form mnm(5)s(2)U34. This is tRNA 5-methylaminomethyl-2-thiouridine biosynthesis bifunctional protein MnmC from Legionella pneumophila (strain Corby).